Consider the following 221-residue polypeptide: Phosphoribosylformylglycinamidine synthase subunit PurQ (221 aa).

Residues 2–221 (NVGVIVFPGS…FAGLLEPVAA (220 aa)) enclose the Glutamine amidotransferase type-1 domain. Residue Cys-86 is the Nucleophile of the active site. Active-site residues include His-194 and Glu-196.

Part of the FGAM synthase complex composed of 1 PurL, 1 PurQ and 2 PurS subunits.

The protein localises to the cytoplasm. The catalysed reaction is N(2)-formyl-N(1)-(5-phospho-beta-D-ribosyl)glycinamide + L-glutamine + ATP + H2O = 2-formamido-N(1)-(5-O-phospho-beta-D-ribosyl)acetamidine + L-glutamate + ADP + phosphate + H(+). It catalyses the reaction L-glutamine + H2O = L-glutamate + NH4(+). It functions in the pathway purine metabolism; IMP biosynthesis via de novo pathway; 5-amino-1-(5-phospho-D-ribosyl)imidazole from N(2)-formyl-N(1)-(5-phospho-D-ribosyl)glycinamide: step 1/2. Part of the phosphoribosylformylglycinamidine synthase complex involved in the purines biosynthetic pathway. Catalyzes the ATP-dependent conversion of formylglycinamide ribonucleotide (FGAR) and glutamine to yield formylglycinamidine ribonucleotide (FGAM) and glutamate. The FGAM synthase complex is composed of three subunits. PurQ produces an ammonia molecule by converting glutamine to glutamate. PurL transfers the ammonia molecule to FGAR to form FGAM in an ATP-dependent manner. PurS interacts with PurQ and PurL and is thought to assist in the transfer of the ammonia molecule from PurQ to PurL. The polypeptide is Phosphoribosylformylglycinamidine synthase subunit PurQ (Synechococcus sp. (strain ATCC 27144 / PCC 6301 / SAUG 1402/1) (Anacystis nidulans)).